Consider the following 229-residue polypeptide: Potassium/proton antiporter CemA (229 aa).

A run of 4 helical transmembrane segments spans residues 6 to 26 (AFIP…ISLC), 107 to 127 (IFHF…SFWG), 152 to 172 (FLIL…GWEL), and 189 to 209 (ILSG…KYWI).

Belongs to the CemA family.

Its subcellular location is the plastid. The protein localises to the chloroplast inner membrane. The enzyme catalyses K(+)(in) + H(+)(out) = K(+)(out) + H(+)(in). Its function is as follows. Contributes to K(+)/H(+) antiport activity by supporting proton efflux to control proton extrusion and homeostasis in chloroplasts in a light-dependent manner to modulate photosynthesis. Prevents excessive induction of non-photochemical quenching (NPQ) under continuous-light conditions. Indirectly promotes efficient inorganic carbon uptake into chloroplasts. The protein is Potassium/proton antiporter CemA of Aethionema grandiflorum (Persian stone-cress).